The sequence spans 709 residues: ATP-binding cassette sub-family F member 3 (709 aa).

Position 2 is an N-acetylalanine (alanine 2). Over residues 129 to 143 (RLKAKQEKRSEKETL) the composition is skewed to basic and acidic residues. A disordered region spans residues 129–171 (RLKAKQEKRSEKETLKTSSPLVLEEASASQAGSRKESRLESSG). Phosphoserine is present on residues serine 155, serine 157, and serine 161. Over residues 161–171 (SRKESRLESSG) the composition is skewed to basic and acidic residues. ABC transporter domains lie at 178–424 (VRIE…LNQQ) and 492–707 (LQLD…RREG). Residue 210–217 (GRNGLGKT) coordinates ATP. Residue serine 283 is modified to Phosphoserine. 525–532 (GENGAGKS) is an ATP binding site.

The protein belongs to the ABC transporter superfamily. ABCF family. EF3 subfamily.

Displays an antiviral effect against flaviviruses such as west Nile virus (WNV) in the presence of OAS1B. The polypeptide is ATP-binding cassette sub-family F member 3 (Abcf3) (Rattus norvegicus (Rat)).